Here is a 51-residue protein sequence, read N- to C-terminus: Large ribosomal subunit protein eL39x (51 aa).

This sequence belongs to the eukaryotic ribosomal protein eL39 family.

The chain is Large ribosomal subunit protein eL39x (RPL39C) from Oryza sativa subsp. japonica (Rice).